The primary structure comprises 431 residues: LWRGVLTTIEVSWRPTVDPERFRPHPTSPPHRPAHTPQPGGVRGADPGWAADGGRGVGDHAQGQQAATVRAEFFWGAAGEGSVTGQANAQDKADREPAARPRDPRSRLAAGPSRGGRGAQPEPPRGSRRETRKPSRSTPLPELLTGPPAPNLPGPIAVEPGRRPSPPPSTRPTYRRRRPTAATPSRKKKARRGPKASKAGREGELGGGSPVAHRGTSLGTGVRDPAPRGGRGRARTPGPVHSAAGGPGSRRRSPGAARDPGPEPGEERGGGGKPPLGSPRATDGNRDPGAGVPARPGRRMGGSSGGRGGTPGRGPERAAPGARPTAPDGAPGRWDGPADGPAPGLGRGGWGVGREAGGSGRSVRTAARPEPCRGLRRGAAGTPGFIGFQMPRLGGRSGNFPPPRPMPGTGLALPRCGRPVEKYRRMRTAHI.

2 disordered regions span residues 17–66 and 81–415; these read VDPE…GQQA and GSVT…ALPR. Basic and acidic residues predominate over residues 91 to 106; sequence DKADREPAARPRDPRS. A compositionally biased stretch (basic residues) spans 173 to 195; that stretch reads TYRRRRPTAATPSRKKKARRGPK. Residues 235-244 are compositionally biased toward low complexity; sequence RTPGPVHSAA. Over residues 299-312 the composition is skewed to gly residues; sequence RMGGSSGGRGGTPG. Residues 317-342 are compositionally biased toward low complexity; the sequence is RAAPGARPTAPDGAPGRWDGPADGPA. Gly residues predominate over residues 343–360; the sequence is PGLGRGGWGVGREAGGSG.

This is an uncharacterized protein from Homo sapiens (Human).